The following is a 208-amino-acid chain: 3-isopropylmalate dehydratase small subunit (208 aa).

This sequence belongs to the LeuD family. LeuD type 1 subfamily. As to quaternary structure, heterodimer of LeuC and LeuD.

The catalysed reaction is (2R,3S)-3-isopropylmalate = (2S)-2-isopropylmalate. It participates in amino-acid biosynthesis; L-leucine biosynthesis; L-leucine from 3-methyl-2-oxobutanoate: step 2/4. Functionally, catalyzes the isomerization between 2-isopropylmalate and 3-isopropylmalate, via the formation of 2-isopropylmaleate. The sequence is that of 3-isopropylmalate dehydratase small subunit from Granulibacter bethesdensis (strain ATCC BAA-1260 / CGDNIH1).